Consider the following 660-residue polypeptide: tRNA 5-methylaminomethyl-2-thiouridine biosynthesis bifunctional protein MnmC (660 aa).

The segment at 1-242 is tRNA (mnm(5)s(2)U34)-methyltransferase; that stretch reads MTDRIVPATL…KRAMLVGEFA (242 aa). Residues 266–660 are FAD-dependent cmnm(5)s(2)U34 oxidoreductase; it reads IGAGLAGCAV…VRALRHGRVA (395 aa).

The protein in the N-terminal section; belongs to the methyltransferase superfamily. tRNA (mnm(5)s(2)U34)-methyltransferase family. It in the C-terminal section; belongs to the DAO family. Requires FAD as cofactor.

The protein resides in the cytoplasm. It carries out the reaction 5-aminomethyl-2-thiouridine(34) in tRNA + S-adenosyl-L-methionine = 5-methylaminomethyl-2-thiouridine(34) in tRNA + S-adenosyl-L-homocysteine + H(+). In terms of biological role, catalyzes the last two steps in the biosynthesis of 5-methylaminomethyl-2-thiouridine (mnm(5)s(2)U) at the wobble position (U34) in tRNA. Catalyzes the FAD-dependent demodification of cmnm(5)s(2)U34 to nm(5)s(2)U34, followed by the transfer of a methyl group from S-adenosyl-L-methionine to nm(5)s(2)U34, to form mnm(5)s(2)U34. This is tRNA 5-methylaminomethyl-2-thiouridine biosynthesis bifunctional protein MnmC from Burkholderia pseudomallei (strain K96243).